Here is a 372-residue protein sequence, read N- to C-terminus: Chaperone protein DnaJ (372 aa).

Residues 5–70 (DYYDVLGVER…QKRANYDQYG (66 aa)) enclose the J domain. A CR-type zinc finger spans residues 130–208 (GTTKDIQINT…CHGDGRVHKK (79 aa)). Zn(2+)-binding residues include Cys-143, Cys-146, Cys-160, Cys-163, Cys-182, Cys-185, Cys-196, and Cys-199. 4 CXXCXGXG motif repeats span residues 143 to 150 (CDSCDGSG), 160 to 167 (CSTCHGAG), 182 to 189 (CPSCHGSG), and 196 to 203 (CKSCHGDG).

Belongs to the DnaJ family. In terms of assembly, homodimer. It depends on Zn(2+) as a cofactor.

The protein resides in the cytoplasm. Functionally, participates actively in the response to hyperosmotic and heat shock by preventing the aggregation of stress-denatured proteins and by disaggregating proteins, also in an autonomous, DnaK-independent fashion. Unfolded proteins bind initially to DnaJ; upon interaction with the DnaJ-bound protein, DnaK hydrolyzes its bound ATP, resulting in the formation of a stable complex. GrpE releases ADP from DnaK; ATP binding to DnaK triggers the release of the substrate protein, thus completing the reaction cycle. Several rounds of ATP-dependent interactions between DnaJ, DnaK and GrpE are required for fully efficient folding. Also involved, together with DnaK and GrpE, in the DNA replication of plasmids through activation of initiation proteins. The chain is Chaperone protein DnaJ from Pasteurella multocida (strain Pm70).